A 535-amino-acid chain; its full sequence is Signal transduction histidine-protein kinase AfsQ2 (535 aa).

The Cytoplasmic segment spans residues 1-30 (MTREHQGGTRGLAAARKGFWSGLRFTSLRL). The chain crosses the membrane as a helical span at residues 31-52 (RLVLVFGLVALTAAVSASGIAY). Over 53 to 198 (WLNREAVLTR…SLEPEAKDLN (146 aa)) the chain is Extracellular. A helical transmembrane segment spans residues 199 to 219 (SLAWSLGIATALALLGSALLA). The Cytoplasmic portion of the chain corresponds to 220–535 (QALATTVLKP…DRGKDAKGQV (316 aa)). The HAMP domain occupies 224 to 276 (TTVLKPVHRLGVAARRLGEGKLDTRLRVSGTDELADLSRTFNSAAENLEKRVA). One can recognise a Histidine kinase domain in the interval 291–510 (DMSHELRTPL…VFTLRLPQDP (220 aa)). At His-294 the chain carries Phosphohistidine. A disordered region spans residues 493–535 (ENAPEGGAVFTLRLPQDPSPPADEDGGPDEETEDRGKDAKGQV). A compositionally biased stretch (acidic residues) spans 514 to 525 (ADEDGGPDEETE). Positions 526–535 (DRGKDAKGQV) are enriched in basic and acidic residues.

The protein localises to the cell membrane. The catalysed reaction is ATP + protein L-histidine = ADP + protein N-phospho-L-histidine.. Its function is as follows. Forms part of a two-component regulatory system AfsQ1/AfsQ2 involved in secondary metabolism. May activate AfsQ1 by phosphorylation. The chain is Signal transduction histidine-protein kinase AfsQ2 (afsQ2) from Streptomyces coelicolor (strain ATCC BAA-471 / A3(2) / M145).